A 524-amino-acid chain; its full sequence is Peptide chain release factor 3 (524 aa).

Residues 10–278 (DSRRTFAIIS…TFLQFAPAPH (269 aa)) enclose the tr-type G domain. Residues 19–26 (SHPDAGKT), 87–91 (DTPGH), and 141–144 (NKLD) each bind GTP.

It belongs to the TRAFAC class translation factor GTPase superfamily. Classic translation factor GTPase family. PrfC subfamily.

It localises to the cytoplasm. Its function is as follows. Increases the formation of ribosomal termination complexes and stimulates activities of RF-1 and RF-2. It binds guanine nucleotides and has strong preference for UGA stop codons. It may interact directly with the ribosome. The stimulation of RF-1 and RF-2 is significantly reduced by GTP and GDP, but not by GMP. This chain is Peptide chain release factor 3, found in Enterococcus faecalis (strain ATCC 700802 / V583).